We begin with the raw amino-acid sequence, 369 residues long: DNA replication and repair protein RecF (369 aa).

Residue 30–37 coordinates ATP; that stretch reads GDNGSGKT.

Belongs to the RecF family.

The protein localises to the cytoplasm. The RecF protein is involved in DNA metabolism; it is required for DNA replication and normal SOS inducibility. RecF binds preferentially to single-stranded, linear DNA. It also seems to bind ATP. The chain is DNA replication and repair protein RecF from Pseudomonas paraeruginosa (strain DSM 24068 / PA7) (Pseudomonas aeruginosa (strain PA7)).